Consider the following 53-residue polypeptide: Sec-independent protein translocase protein TatA (53 aa).

A helical transmembrane segment spans residues 1 to 21 (MGMSLSHLLIVLLIIFVLFGA).

Belongs to the TatA/E family. In terms of assembly, the Tat system comprises two distinct complexes: a TatABC complex, containing multiple copies of TatA, TatB and TatC subunits, and a separate TatA complex, containing only TatA subunits. Substrates initially bind to the TatABC complex, which probably triggers association of the separate TatA complex to form the active translocon.

It is found in the cell inner membrane. In terms of biological role, part of the twin-arginine translocation (Tat) system that transports large folded proteins containing a characteristic twin-arginine motif in their signal peptide across membranes. TatA could form the protein-conducting channel of the Tat system. The protein is Sec-independent protein translocase protein TatA of Rickettsia conorii (strain ATCC VR-613 / Malish 7).